A 433-amino-acid chain; its full sequence is Ectonucleoside triphosphate diphosphohydrolase 5 (433 aa).

The first 24 residues, 1–24 (MATTWGAAFFMLVASCVCSTVFHR), serve as a signal peptide directing secretion. Glutamate 172 serves as the catalytic Proton acceptor. A glycan (N-linked (GlcNAc...) asparagine) is linked at asparagine 232. 2 cysteine pairs are disulfide-bonded: cysteine 272–cysteine 308 and cysteine 368–cysteine 382.

The protein belongs to the GDA1/CD39 NTPase family. In terms of assembly, monomer; active form. Homodimer; disulfide-linked. Homodimers are enzymatically inactive. Ca(2+) serves as cofactor. Requires Mg(2+) as cofactor. In terms of processing, N-glycosylated; high-mannose type.

Its subcellular location is the endoplasmic reticulum. The protein localises to the secreted. The enzyme catalyses a ribonucleoside 5'-diphosphate + H2O = a ribonucleoside 5'-phosphate + phosphate + H(+). It catalyses the reaction GDP + H2O = GMP + phosphate + H(+). The catalysed reaction is UDP + H2O = UMP + phosphate + H(+). It carries out the reaction IDP + H2O = IMP + phosphate + H(+). The enzyme catalyses CDP + H2O = CMP + phosphate + H(+). It catalyses the reaction ADP + H2O = AMP + phosphate + H(+). Its pathway is protein modification; protein glycosylation. Functionally, hydrolyzes nucleoside diphosphates with a preference for GDP, IDP and UDP compared to ADP and CDP. In the lumen of the endoplasmic reticulum, hydrolyzes UDP that acts as an end-product feedback inhibitor of the UDP-Glc:glycoprotein glucosyltransferases. UMP can be transported back by an UDP-sugar antiporter to the cytosol where it is consumed to regenerate UDP-glucose. Therefore, it positively regulates protein reglucosylation by clearing UDP from the ER lumen and by promoting the regeneration of UDP-glucose. Protein reglucosylation is essential to proper glycoprotein folding and quality control in the ER. The chain is Ectonucleoside triphosphate diphosphohydrolase 5 (ENTPD5) from Ailuropoda melanoleuca (Giant panda).